A 263-amino-acid chain; its full sequence is Hemophilin (263 aa).

An N-terminal signal peptide occupies residues 1-20 (MKISQLFLGLVACSTAFAYA). Positions 42, 58, 104, and 105 each coordinate heme b.

In terms of assembly, monomer in solution. Interacts with host hemoglobin.

The protein resides in the secreted. In terms of biological role, part of a high affinity heme acquisition system. Functions as a hemophore that acquires heme from human hemoglobin and delivers the heme to its cognate receptor, HphR, facilitating transport of heme across the bacterial outer membrane. Apo HphA interacts specifically with human hemoglobin and steals heme through a passive process probably due to its high affinity for heme. It can also acquire heme complexed to human serum albumin. Plays a supporting role for full virulence, acting as an accessory factor that enhances the process of heme uptake. This is Hemophilin from Acinetobacter baumannii.